Reading from the N-terminus, the 230-residue chain is Cytochrome c oxidase subunit 2 (230 aa).

The Mitochondrial intermembrane portion of the chain corresponds to 1-14 (MAHPSQLGFQDAAS). The chain crosses the membrane as a helical span at residues 15–45 (PVMEELLHFHDHALMIVFLISTLVLYIIVAM). The Mitochondrial matrix portion of the chain corresponds to 46-59 (VSTKLTNKYILDSQ). Residues 60 to 87 (EIEIIWTVLPAVILILIALPSLRILYLM) form a helical membrane-spanning segment. Residues 88–230 (DEINDPHLTI…SWSSLMLEDA (143 aa)) are Mitochondrial intermembrane-facing. The Cu cation site is built by His161, Cys196, Glu198, Cys200, His204, and Met207. A Mg(2+)-binding site is contributed by Glu198.

It belongs to the cytochrome c oxidase subunit 2 family. As to quaternary structure, component of the cytochrome c oxidase (complex IV, CIV), a multisubunit enzyme composed of 14 subunits. The complex is composed of a catalytic core of 3 subunits MT-CO1, MT-CO2 and MT-CO3, encoded in the mitochondrial DNA, and 11 supernumerary subunits COX4I, COX5A, COX5B, COX6A, COX6B, COX6C, COX7A, COX7B, COX7C, COX8 and NDUFA4, which are encoded in the nuclear genome. The complex exists as a monomer or a dimer and forms supercomplexes (SCs) in the inner mitochondrial membrane with NADH-ubiquinone oxidoreductase (complex I, CI) and ubiquinol-cytochrome c oxidoreductase (cytochrome b-c1 complex, complex III, CIII), resulting in different assemblies (supercomplex SCI(1)III(2)IV(1) and megacomplex MCI(2)III(2)IV(2)). Found in a complex with TMEM177, COA6, COX18, COX20, SCO1 and SCO2. Interacts with TMEM177 in a COX20-dependent manner. Interacts with COX20. Interacts with COX16. The cofactor is Cu cation.

The protein resides in the mitochondrion inner membrane. It catalyses the reaction 4 Fe(II)-[cytochrome c] + O2 + 8 H(+)(in) = 4 Fe(III)-[cytochrome c] + 2 H2O + 4 H(+)(out). Functionally, component of the cytochrome c oxidase, the last enzyme in the mitochondrial electron transport chain which drives oxidative phosphorylation. The respiratory chain contains 3 multisubunit complexes succinate dehydrogenase (complex II, CII), ubiquinol-cytochrome c oxidoreductase (cytochrome b-c1 complex, complex III, CIII) and cytochrome c oxidase (complex IV, CIV), that cooperate to transfer electrons derived from NADH and succinate to molecular oxygen, creating an electrochemical gradient over the inner membrane that drives transmembrane transport and the ATP synthase. Cytochrome c oxidase is the component of the respiratory chain that catalyzes the reduction of oxygen to water. Electrons originating from reduced cytochrome c in the intermembrane space (IMS) are transferred via the dinuclear copper A center (CU(A)) of subunit 2 and heme A of subunit 1 to the active site in subunit 1, a binuclear center (BNC) formed by heme A3 and copper B (CU(B)). The BNC reduces molecular oxygen to 2 water molecules using 4 electrons from cytochrome c in the IMS and 4 protons from the mitochondrial matrix. The chain is Cytochrome c oxidase subunit 2 (mt-co2) from Gadus morhua (Atlantic cod).